A 772-amino-acid chain; its full sequence is 5-methyltetrahydropteroyltriglutamate--homocysteine methyltransferase (772 aa).

Residues 24 to 27 (RELK) and K120 contribute to the 5-methyltetrahydropteroyltri-L-glutamate site. The segment at 404–428 (DPAVRSRTAATTDADARRSGPYPER) is disordered. L-homocysteine-binding positions include 446–448 (IGS) and E499. L-methionine contacts are provided by residues 446 to 448 (IGS) and E499. W576 is a binding site for 5-methyltetrahydropteroyltri-L-glutamate. D614 contacts L-homocysteine. D614 provides a ligand contact to L-methionine. 5-methyltetrahydropteroyltri-L-glutamate is bound at residue E620. Residues H656, C658, and E680 each coordinate Zn(2+). H709 acts as the Proton donor in catalysis. C741 contacts Zn(2+).

Belongs to the vitamin-B12 independent methionine synthase family. The cofactor is Zn(2+).

It catalyses the reaction 5-methyltetrahydropteroyltri-L-glutamate + L-homocysteine = tetrahydropteroyltri-L-glutamate + L-methionine. The protein operates within amino-acid biosynthesis; L-methionine biosynthesis via de novo pathway; L-methionine from L-homocysteine (MetE route): step 1/1. Functionally, catalyzes the transfer of a methyl group from 5-methyltetrahydrofolate to homocysteine resulting in methionine formation. The chain is 5-methyltetrahydropteroyltriglutamate--homocysteine methyltransferase from Streptomyces avermitilis (strain ATCC 31267 / DSM 46492 / JCM 5070 / NBRC 14893 / NCIMB 12804 / NRRL 8165 / MA-4680).